The following is a 287-amino-acid chain: Urease accessory protein UreD (287 aa).

It belongs to the UreD family. As to quaternary structure, ureD, UreF and UreG form a complex that acts as a GTP-hydrolysis-dependent molecular chaperone, activating the urease apoprotein by helping to assemble the nickel containing metallocenter of UreC. The UreE protein probably delivers the nickel.

It localises to the cytoplasm. Functionally, required for maturation of urease via the functional incorporation of the urease nickel metallocenter. The chain is Urease accessory protein UreD from Aliivibrio fischeri (strain MJ11) (Vibrio fischeri).